Here is a 263-residue protein sequence, read N- to C-terminus: Cytochrome c oxidase subunit 3 (263 aa).

Transmembrane regions (helical) follow at residues Pro-9–Leu-29, Phe-40–Trp-60, Gly-84–Phe-104, Ile-129–Ala-149, Ala-161–Tyr-181, Thr-198–Leu-218, and Ala-241–Trp-261.

It belongs to the cytochrome c oxidase subunit 3 family. As to quaternary structure, component of the cytochrome c oxidase (complex IV, CIV), a multisubunit enzyme composed of a catalytic core of 3 subunits and several supernumerary subunits. The complex exists as a monomer or a dimer and forms supercomplexes (SCs) in the inner mitochondrial membrane with ubiquinol-cytochrome c oxidoreductase (cytochrome b-c1 complex, complex III, CIII).

Its subcellular location is the mitochondrion inner membrane. It carries out the reaction 4 Fe(II)-[cytochrome c] + O2 + 8 H(+)(in) = 4 Fe(III)-[cytochrome c] + 2 H2O + 4 H(+)(out). Functionally, component of the cytochrome c oxidase, the last enzyme in the mitochondrial electron transport chain which drives oxidative phosphorylation. The respiratory chain contains 3 multisubunit complexes succinate dehydrogenase (complex II, CII), ubiquinol-cytochrome c oxidoreductase (cytochrome b-c1 complex, complex III, CIII) and cytochrome c oxidase (complex IV, CIV), that cooperate to transfer electrons derived from NADH and succinate to molecular oxygen, creating an electrochemical gradient over the inner membrane that drives transmembrane transport and the ATP synthase. Cytochrome c oxidase is the component of the respiratory chain that catalyzes the reduction of oxygen to water. Electrons originating from reduced cytochrome c in the intermembrane space (IMS) are transferred via the dinuclear copper A center (CU(A)) of subunit 2 and heme A of subunit 1 to the active site in subunit 1, a binuclear center (BNC) formed by heme A3 and copper B (CU(B)). The BNC reduces molecular oxygen to 2 water molecules using 4 electrons from cytochrome c in the IMS and 4 protons from the mitochondrial matrix. This Locusta migratoria (Migratory locust) protein is Cytochrome c oxidase subunit 3 (COIII).